The primary structure comprises 194 residues: Probable GTP-binding protein EngB (194 aa).

One can recognise an EngB-type G domain in the interval 22–194 (LFLEVAFAGR…WQELDTMLNP (173 aa)). Residues 30 to 37 (GRSNVGKS), 57 to 61 (GCTQL), 75 to 78 (DLPG), 142 to 145 (TKAD), and 173 to 175 (FSS) each bind GTP. Ser-37 and Thr-59 together coordinate Mg(2+).

Belongs to the TRAFAC class TrmE-Era-EngA-EngB-Septin-like GTPase superfamily. EngB GTPase family. Mg(2+) serves as cofactor.

Its function is as follows. Necessary for normal cell division and for the maintenance of normal septation. The polypeptide is Probable GTP-binding protein EngB (Desulforapulum autotrophicum (strain ATCC 43914 / DSM 3382 / VKM B-1955 / HRM2) (Desulfobacterium autotrophicum)).